We begin with the raw amino-acid sequence, 492 residues long: Probable G-protein coupled receptor Mth-like 8 (492 aa).

The first 21 residues, 1 to 21 (MAQFCILGVLLILSGTHCSWG), serve as a signal peptide directing secretion. At 22–218 (FHEETHYPCA…FVLGVREWTY (197 aa)) the chain is on the extracellular side. 4 disulfide bridges follow: Cys30/Cys82, Cys84/Cys89, Cys93/Cys184, and Cys94/Cys107. N-linked (GlcNAc...) asparagine glycans are attached at residues Asn37 and Asn51. N-linked (GlcNAc...) asparagine glycans are attached at residues Asn129, Asn169, and Asn192. Residues 219 to 239 (AICLLIAILSMFIVLMVYLMC) form a helical membrane-spanning segment. The Cytoplasmic portion of the chain corresponds to 240-245 (SEMRNS). A helical transmembrane segment spans residues 246-266 (FYGVAIKAYAICMILGYALLA). The Extracellular portion of the chain corresponds to 267–282 (YLTLHNPANLSNAACR). Residue Asn275 is glycosylated (N-linked (GlcNAc...) asparagine). The chain crosses the membrane as a helical span at residues 283–303 (ILPSLALMNLVLSFYILSFIA). Over 304-317 (FKLYLSFYGVVFTK) the chain is Cytoplasmic. A helical transmembrane segment spans residues 318–338 (LMFWLIFTPIVLVAVGWSFFV). Residues 339–362 (GFSYYGSRLIFGGDTCWFDPRNWS) lie on the Extracellular side of the membrane. Asn360 is a glycosylation site (N-linked (GlcNAc...) asparagine). Residues 363–383 (VMIYFYAPVFVACAISGFFYV) form a helical membrane-spanning segment. Residues 384-411 (LSQIYIRDQPDIETEKSFESIEKNRFKS) lie on the Cytoplasmic side of the membrane. Residues 412 to 432 (FWKYFGYTAVVWVVCICSFAF) traverse the membrane as a helical segment. The Extracellular portion of the chain corresponds to 433–441 (NYYWENRSH). Residue Asn438 is glycosylated (N-linked (GlcNAc...) asparagine). Residues 442-462 (LNYAVSFCMAFHGFAALYALI) traverse the membrane as a helical segment. At 463–492 (GKNQQIQNFLRRIDNGEDTCENSVPLSSFG) the chain is on the cytoplasmic side.

The protein belongs to the G-protein coupled receptor 2 family. Mth subfamily.

The protein localises to the cell membrane. In Drosophila melanogaster (Fruit fly), this protein is Probable G-protein coupled receptor Mth-like 8 (mthl8).